Here is a 357-residue protein sequence, read N- to C-terminus: 3-isopropylmalate dehydrogenase (357 aa).

76–89 (GYQWESLDISVRPE) lines the NAD(+) pocket. Substrate-binding residues include R96, R106, R134, and D224. Residues D224, D248, and D252 each contribute to the Mg(2+) site. NAD(+) is bound at residue 282 to 294 (GSAPDIAGQNIAN).

It belongs to the isocitrate and isopropylmalate dehydrogenases family. LeuB type 1 subfamily. Homodimer. It depends on Mg(2+) as a cofactor. Mn(2+) serves as cofactor.

The protein localises to the cytoplasm. It catalyses the reaction (2R,3S)-3-isopropylmalate + NAD(+) = 4-methyl-2-oxopentanoate + CO2 + NADH. It functions in the pathway amino-acid biosynthesis; L-leucine biosynthesis; L-leucine from 3-methyl-2-oxobutanoate: step 3/4. Its function is as follows. Catalyzes the oxidation of 3-carboxy-2-hydroxy-4-methylpentanoate (3-isopropylmalate) to 3-carboxy-4-methyl-2-oxopentanoate. The product decarboxylates to 4-methyl-2 oxopentanoate. This Hydrogenovibrio crunogenus (strain DSM 25203 / XCL-2) (Thiomicrospira crunogena) protein is 3-isopropylmalate dehydrogenase.